A 453-amino-acid chain; its full sequence is tRNA modification GTPase MnmE (453 aa).

(6S)-5-formyl-5,6,7,8-tetrahydrofolate-binding residues include arginine 22, glutamate 79, and lysine 119. The TrmE-type G domain maps to 215–376; sequence GMKVVIAGRP…LKLHLKSLMG (162 aa). Asparagine 225 lines the K(+) pocket. GTP is bound by residues 225-230, 244-250, 269-272, and 334-337; these read NAGKSS, TEIAGTT, DTAG, and NKAD. Mg(2+) is bound at residue serine 229. K(+) contacts are provided by threonine 244, isoleucine 246, and threonine 249. Threonine 250 is a binding site for Mg(2+). Lysine 453 is a (6S)-5-formyl-5,6,7,8-tetrahydrofolate binding site.

It belongs to the TRAFAC class TrmE-Era-EngA-EngB-Septin-like GTPase superfamily. TrmE GTPase family. Homodimer. Heterotetramer of two MnmE and two MnmG subunits. Requires K(+) as cofactor.

It localises to the cytoplasm. Functionally, exhibits a very high intrinsic GTPase hydrolysis rate. Involved in the addition of a carboxymethylaminomethyl (cmnm) group at the wobble position (U34) of certain tRNAs, forming tRNA-cmnm(5)s(2)U34. The sequence is that of tRNA modification GTPase MnmE from Shewanella sp. (strain W3-18-1).